A 187-amino-acid chain; its full sequence is Large ribosomal subunit protein uL13 (187 aa).

It belongs to the universal ribosomal protein uL13 family.

This Dictyostelium discoideum (Social amoeba) protein is Large ribosomal subunit protein uL13 (rpl13a).